Here is a 1063-residue protein sequence, read N- to C-terminus: TBC1 domain family member 31 (1063 aa).

WD repeat units follow at residues 33-74, 75-116, 117-157, 158-200, 201-248, 249-296, and 297-334; these read HNTS…LCGN, RFNL…TVTK, ELVS…LDTF, QRKR…CDTL, VCKY…AKQL, FRII…IQTC, and KLLFEIGSLDDGISSSVISPHGRYIASIMENGSLNIYS. Residues 424 to 599 form the Rab-GAP TBC domain; that stretch reads EFPTKYRMFI…KLFDNVFSNH (176 aa). The stretch at 699-951 forms a coiled coil; the sequence is ELDYLRERQA…EAKKWEEAEE (253 aa). The interval 1050 to 1053 is mediates direct interaction with PJA2; sequence QAQN.

Interacts with PJA2; the interaction is direct and recruits PJA2 to centrosomes. Interacts with OFD1; regulates its activity in cilium assembly. Interacts with PRKACA.

It localises to the cytoplasm. The protein localises to the cytoskeleton. It is found in the microtubule organizing center. Its subcellular location is the centrosome. The protein resides in the centriolar satellite. It localises to the cilium basal body. In terms of biological role, molecular adapter which is involved in cilium biogenesis. Part of a functional complex including OFD1 a centriolar protein involved in cilium assembly. Could regulate the cAMP-dependent phosphorylation of OFD1, and its subsequent ubiquitination by PJA2 which ultimately leads to its proteasomal degradation. This Bos taurus (Bovine) protein is TBC1 domain family member 31.